Consider the following 300-residue polypeptide: HTH-type transcriptional regulator ArgP (300 aa).

An HTH lysR-type domain is found at 4–60; the sequence is FDYKLLAALAAVVEQGGFERAAQALGLSQSAVSQRIKLLEARVGQPVLVRETPPHPT. Positions 21–40 form a DNA-binding region, H-T-H motif; sequence FERAAQALGLSQSAVSQRIK.

The protein belongs to the LysR transcriptional regulatory family. As to quaternary structure, homodimer.

Functionally, controls the transcription of genes involved in arginine and lysine metabolism. The sequence is that of HTH-type transcriptional regulator ArgP from Pseudomonas aeruginosa (strain UCBPP-PA14).